The primary structure comprises 130 residues: Putative transposase for insertion sequence element IS6501 (130 aa).

The protein belongs to the transposase 11 family.

In terms of biological role, involved in the transposition of the insertion sequence. This is Putative transposase for insertion sequence element IS6501 from Brucella ovis (strain ATCC 25840 / 63/290 / NCTC 10512).